A 167-amino-acid polypeptide reads, in one-letter code: Ribosome maturation factor RimM (167 aa).

Residues 94-165 (ENEYYYSDII…KIIITPMEGL (72 aa)) form the PRC barrel domain.

It belongs to the RimM family. Binds ribosomal protein uS19.

The protein resides in the cytoplasm. Its function is as follows. An accessory protein needed during the final step in the assembly of 30S ribosomal subunit, possibly for assembly of the head region. Essential for efficient processing of 16S rRNA. May be needed both before and after RbfA during the maturation of 16S rRNA. It has affinity for free ribosomal 30S subunits but not for 70S ribosomes. The protein is Ribosome maturation factor RimM of Staphylococcus aureus (strain bovine RF122 / ET3-1).